The following is a 584-amino-acid chain: Keratin, type I cytoskeletal 10 (584 aa).

Residues 1-15 are compositionally biased toward low complexity; the sequence is MSVRYSSSKHYSSSR. A disordered region spans residues 1 to 24; it reads MSVRYSSSKHYSSSRSGGGGGGGG. The tract at residues 1 to 145 is head; that stretch reads MSVRYSSSKH…GGDGGLLSGN (145 aa). Phosphoserine is present on residues S14, S16, S42, S53, S56, and S170. A coil 1A region spans residues 146–181; the sequence is EKVTMQNLNDRLASYLDKVRALEESNYELEGKIKEW. The IF rod domain maps to 146 to 460; the sequence is EKVTMQNLND…SLLEGEGSSG (315 aa). A linker 1 region spans residues 182 to 202; it reads YEKHGNSHQGEPRDYSKYYKT. A coil 1B region spans residues 203–294; sequence IDDLKNQILN…KNHEEEMKDL (92 aa). The tract at residues 295 to 317 is linker 12; it reads RNVSTGDVNVEMNAAPGVDLTQL. Positions 318-456 are coil 2; sequence LNNMRSQYEQ…QTYRSLLEGE (139 aa). A disordered region spans residues 453–584; that stretch reads LEGEGSSGGG…GESSSKGPRY (132 aa). Positions 457 to 563 are enriched in gly residues; it reads GSSGGGGRGG…GGGYGGGSSS (107 aa). Residues 457–584 form a tail region; it reads GSSGGGGRGG…GESSSKGPRY (128 aa). Over residues 564–584 the composition is skewed to low complexity; sequence GGHKSSSSGSVGESSSKGPRY.

It belongs to the intermediate filament family. Heterotetramer of two type I and two type II keratins. Heterodimer with KRT1. Two heterodimers of KRT1 and KRT10 form a heterotetramer. The KRT10 subunit in the heterotetramer is probably disulfide-linked. Interacts with PLEC isoform 1C, when in a heterodimer with KRT1. As to quaternary structure, (Microbial infection) Interacts (via C-terminal tail domain) with the S.aureus clumping factor, clfB; this interaction probably mediates S.aureus attachment to the keratinized squamous epithelial cells from the nasal cavity. In terms of assembly, (Microbial infection) Interacts (via the C-terminal tail domain) with S.pneumoniae serine-rich repeat protein PsrP; this interaction probably mediates S.pneumoniae adherence to lung tissue and subsequent pathogenesis. Neither protein has to be glycosylated for the interaction to occur. In terms of tissue distribution, seen in all suprabasal cell layers including stratum corneum. Expressed on the surface of lung cell lines. Localized on the surface of desquamated nasal epithelial cells (at protein level).

The protein localises to the secreted. It localises to the extracellular space. The protein resides in the cell surface. It is found in the cytoplasm. Its function is as follows. Plays a role in the establishment of the epidermal barrier on plantar skin. Involved in the maintenance of cell layer development and keratin filament bundles in suprabasal cells of the epithelium. In terms of biological role, (Microbial infection) Acts as a mediator of S.aureus adherence to desquamated nasal epithelial cells via clfB, and hence may play a role in nasal colonization. (Microbial infection) Binds S.pneumoniae PsrP, mediating adherence of the bacteria to lung cell lines. Reduction of levels of KRT10 keratin decrease adherence, overexpression increases adherence. Neither protein has to be glycosylated for the interaction to occur. This is Keratin, type I cytoskeletal 10 (KRT10) from Homo sapiens (Human).